Reading from the N-terminus, the 295-residue chain is Ribosomal protein L11 methyltransferase (295 aa).

S-adenosyl-L-methionine is bound by residues Thr-150, Gly-171, Asp-193, and Asn-232.

Belongs to the methyltransferase superfamily. PrmA family.

Its subcellular location is the cytoplasm. The catalysed reaction is L-lysyl-[protein] + 3 S-adenosyl-L-methionine = N(6),N(6),N(6)-trimethyl-L-lysyl-[protein] + 3 S-adenosyl-L-homocysteine + 3 H(+). Methylates ribosomal protein L11. The protein is Ribosomal protein L11 methyltransferase of Neisseria gonorrhoeae (strain ATCC 700825 / FA 1090).